Reading from the N-terminus, the 585-residue chain is MAGUK p55 subfamily member 3 (585 aa).

L27 domains lie at 6–60 and 61–118; these read EDSG…ERQS and PTPV…FDPV. The region spanning 137–218 is the PDZ domain; it reads IVRLVKNKEP…SITLKIIPAT (82 aa). Positions 226–296 constitute an SH3 domain; that stretch reads ESKVFMRALF…PSKQFQERRL (71 aa). Serine 307 is subject to Phosphoserine. The Guanylate kinase-like domain maps to 385–570; the sequence is SRLVVLIGSL…VCSQLRAVIE (186 aa). The disordered stretch occupies residues 510-530; it reads KRKTPPVSPDSEDPATPLDEQ.

It belongs to the MAGUK family. Interacts with HTR2C; this interaction stabilizes the receptor at the plasma membrane and prevents the desensitization of the HTR2C receptor-mediated calcium response. Interacts with HTR2A. Interacts with HTR4. Interacts (via PDZ domain) with CADM1 (via C-terminus)Interacts (via PDZ domain) with CADM1; this interaction connects CADM1 with DLG1. Interacts (via Guanylate kinase-like domain) with PALS1. Interacts with DLG1 (via N-terminus); this interaction connects CADM1 with DLG1 and links CADM1 with the regulatory subunit of phosphoinositide-3-kinase (PI3K) by forming a multiprotein complex and participates in cell spreading.

It localises to the apical cell membrane. The protein localises to the cell membrane. It is found in the cell junction. The protein resides in the adherens junction. Functionally, participates in cell spreading through the phosphoinositide-3-kinase (PI3K) pathway by connecting CADM1 to DLG1 and the regulatory subunit of phosphoinositide-3-kinase (PI3K). Stabilizes HTR2C at the plasma membrane and prevents its desensitization. May participates in the maintenance of adherens junctions. The sequence is that of MAGUK p55 subfamily member 3 from Rattus norvegicus (Rat).